Reading from the N-terminus, the 425-residue chain is Enolase (425 aa).

Q165 serves as a coordination point for (2R)-2-phosphoglycerate. E207 serves as the catalytic Proton donor. The Mg(2+) site is built by D244, E285, and D312. 4 residues coordinate (2R)-2-phosphoglycerate: K337, R366, S367, and K388. Residue K337 is the Proton acceptor of the active site.

Belongs to the enolase family. Requires Mg(2+) as cofactor.

Its subcellular location is the cytoplasm. The protein localises to the secreted. It is found in the cell surface. The enzyme catalyses (2R)-2-phosphoglycerate = phosphoenolpyruvate + H2O. It participates in carbohydrate degradation; glycolysis; pyruvate from D-glyceraldehyde 3-phosphate: step 4/5. Its function is as follows. Catalyzes the reversible conversion of 2-phosphoglycerate (2-PG) into phosphoenolpyruvate (PEP). It is essential for the degradation of carbohydrates via glycolysis. The polypeptide is Enolase (Wolbachia sp. subsp. Brugia malayi (strain TRS)).